The following is a 757-amino-acid chain: Cellulose synthase-like protein B5 (757 aa).

2 consecutive transmembrane segments (helical) span residues Ala-24–Ile-44 and Val-50–Cys-70. Active-site residues include Asp-136 and Asp-460. 6 helical membrane-spanning segments follow: residues Leu-531–Leu-551, Ile-572–Phe-592, Leu-613–Ile-633, Leu-671–Val-691, Gly-704–Leu-724, and Ile-735–Val-755.

The protein belongs to the glycosyltransferase 2 family. Plant cellulose synthase-like B subfamily. As to expression, expressed in young seedlings, primarily in the vascular tissue. Expressed in the root cap.

It is found in the golgi apparatus membrane. Thought to be a Golgi-localized beta-glycan synthase that polymerize the backbones of noncellulosic polysaccharides (hemicelluloses) of plant cell wall. The polypeptide is Cellulose synthase-like protein B5 (CSLB5) (Arabidopsis thaliana (Mouse-ear cress)).